A 339-amino-acid polypeptide reads, in one-letter code: Ketol-acid reductoisomerase (NADP(+)) (339 aa).

Residues 1 to 182 form the KARI N-terminal Rossmann domain; sequence MRVYYDRDAD…GGGRSGVIET (182 aa). NADP(+)-binding positions include 24–27, Arg48, Ser51, Thr53, and 83–86; these read YGSQ and DELQ. His108 is a catalytic residue. Gly134 serves as a coordination point for NADP(+). One can recognise a KARI C-terminal knotted domain in the interval 183–328; that stretch reads TFKEECETDL…GKLRAMMPWI (146 aa). Mg(2+)-binding residues include Asp191, Glu195, Glu227, and Glu231. Ser252 lines the substrate pocket.

The protein belongs to the ketol-acid reductoisomerase family. It depends on Mg(2+) as a cofactor.

It carries out the reaction (2R)-2,3-dihydroxy-3-methylbutanoate + NADP(+) = (2S)-2-acetolactate + NADPH + H(+). The enzyme catalyses (2R,3R)-2,3-dihydroxy-3-methylpentanoate + NADP(+) = (S)-2-ethyl-2-hydroxy-3-oxobutanoate + NADPH + H(+). It participates in amino-acid biosynthesis; L-isoleucine biosynthesis; L-isoleucine from 2-oxobutanoate: step 2/4. The protein operates within amino-acid biosynthesis; L-valine biosynthesis; L-valine from pyruvate: step 2/4. Its function is as follows. Involved in the biosynthesis of branched-chain amino acids (BCAA). Catalyzes an alkyl-migration followed by a ketol-acid reduction of (S)-2-acetolactate (S2AL) to yield (R)-2,3-dihydroxy-isovalerate. In the isomerase reaction, S2AL is rearranged via a Mg-dependent methyl migration to produce 3-hydroxy-3-methyl-2-ketobutyrate (HMKB). In the reductase reaction, this 2-ketoacid undergoes a metal-dependent reduction by NADPH to yield (R)-2,3-dihydroxy-isovalerate. In Brucella abortus (strain S19), this protein is Ketol-acid reductoisomerase (NADP(+)).